A 286-amino-acid polypeptide reads, in one-letter code: Homoserine kinase (286 aa).

78-88 provides a ligand contact to ATP; that stretch reads PLARGLGSSSS.

The protein belongs to the GHMP kinase family. Homoserine kinase subfamily.

The protein resides in the cytoplasm. The enzyme catalyses L-homoserine + ATP = O-phospho-L-homoserine + ADP + H(+). It participates in amino-acid biosynthesis; L-threonine biosynthesis; L-threonine from L-aspartate: step 4/5. Its function is as follows. Catalyzes the ATP-dependent phosphorylation of L-homoserine to L-homoserine phosphate. In Streptococcus thermophilus (strain CNRZ 1066), this protein is Homoserine kinase.